The following is a 295-amino-acid chain: Elongation factor Ts (295 aa).

The tract at residues 79–82 (TDFV) is involved in Mg(2+) ion dislocation from EF-Tu.

This sequence belongs to the EF-Ts family.

The protein localises to the cytoplasm. In terms of biological role, associates with the EF-Tu.GDP complex and induces the exchange of GDP to GTP. It remains bound to the aminoacyl-tRNA.EF-Tu.GTP complex up to the GTP hydrolysis stage on the ribosome. The chain is Elongation factor Ts from Bacillus cytotoxicus (strain DSM 22905 / CIP 110041 / 391-98 / NVH 391-98).